Here is a 260-residue protein sequence, read N- to C-terminus: 3-deoxy-manno-octulosonate cytidylyltransferase (260 aa).

Belongs to the KdsB family.

The protein resides in the cytoplasm. It carries out the reaction 3-deoxy-alpha-D-manno-oct-2-ulosonate + CTP = CMP-3-deoxy-beta-D-manno-octulosonate + diphosphate. The protein operates within nucleotide-sugar biosynthesis; CMP-3-deoxy-D-manno-octulosonate biosynthesis; CMP-3-deoxy-D-manno-octulosonate from 3-deoxy-D-manno-octulosonate and CTP: step 1/1. It participates in bacterial outer membrane biogenesis; lipopolysaccharide biosynthesis. Activates KDO (a required 8-carbon sugar) for incorporation into bacterial lipopolysaccharide in Gram-negative bacteria. In Polaromonas naphthalenivorans (strain CJ2), this protein is 3-deoxy-manno-octulosonate cytidylyltransferase.